A 209-amino-acid polypeptide reads, in one-letter code: Transmembrane emp24 domain-containing protein B (209 aa).

A signal peptide spans 1-24 (MNKTNQLINICILVTLFLIGSSSA). The Lumenal segment spans residues 25 to 174 (LTLQVEPKSQ…RDTSESTNAR (150 aa)). The region spanning 34–119 (QECFYNFIES…AKVVTFTWAS (86 aa)) is the GOLD domain. Residues 175–195 (VVWWTIAEVIVLVVMGVGQIW) traverse the membrane as a helical segment. Topologically, residues 196 to 209 (YLRKWFDNKSTGRV) are cytoplasmic.

Belongs to the EMP24/GP25L family.

It localises to the cytoplasmic vesicle membrane. In terms of biological role, could have a role in the budding of coatomer-coated and other species of coated vesicles. The protein is Transmembrane emp24 domain-containing protein B (empB) of Dictyostelium discoideum (Social amoeba).